The primary structure comprises 249 residues: Flagellar L-ring protein (249 aa).

The N-terminal stretch at Met-1 to Gly-25 is a signal peptide. Cys-26 carries the N-palmitoyl cysteine lipid modification. The S-diacylglycerol cysteine moiety is linked to residue Cys-26.

The protein belongs to the FlgH family. As to quaternary structure, the basal body constitutes a major portion of the flagellar organelle and consists of four rings (L,P,S, and M) mounted on a central rod.

It is found in the cell outer membrane. It localises to the bacterial flagellum basal body. In terms of biological role, assembles around the rod to form the L-ring and probably protects the motor/basal body from shearing forces during rotation. The chain is Flagellar L-ring protein from Afipia carboxidovorans (strain ATCC 49405 / DSM 1227 / KCTC 32145 / OM5) (Oligotropha carboxidovorans).